A 495-amino-acid chain; its full sequence is Glutamate--tRNA ligase (495 aa).

The 'HIGH' region motif lies at 13–23 (PSPTGTPHVGL). The 'KMSKS' region signature appears at 257-261 (KLSKR). Position 260 (Lys-260) interacts with ATP.

Belongs to the class-I aminoacyl-tRNA synthetase family. Glutamate--tRNA ligase type 1 subfamily. In terms of assembly, monomer.

Its subcellular location is the cytoplasm. The enzyme catalyses tRNA(Glu) + L-glutamate + ATP = L-glutamyl-tRNA(Glu) + AMP + diphosphate. Its function is as follows. Catalyzes the attachment of glutamate to tRNA(Glu) in a two-step reaction: glutamate is first activated by ATP to form Glu-AMP and then transferred to the acceptor end of tRNA(Glu). The chain is Glutamate--tRNA ligase from Mycolicibacterium vanbaalenii (strain DSM 7251 / JCM 13017 / BCRC 16820 / KCTC 9966 / NRRL B-24157 / PYR-1) (Mycobacterium vanbaalenii).